Here is a 485-residue protein sequence, read N- to C-terminus: MIYTAIDVGASSGRIMVGELNEGKLDIQEIHRFANGFSQRDGHCLWDIDHLLKQILQGLQKVKTLGYEHCTVGIDTWAVDYVLLDEKGDRLREAISYRDRRTDHTIDKLEHTLSKAAIYQKTGIQFQPFNTIYQLFEEDRELLKKTDKIMMIPDYLGYCLTGKAVTEITNVSTTQLLNVSTGNLDPELLEAVSVLEQQFAPLTEPGCELGKLRNEWFPDYDLPACKVMTVATHDTASAVIAAPGVNDGWAYISSGTWSLIGVENKTPIITDLALENNYTNERGANNTIRFLKNIIGMWVIQEVKQQLQADYSFQQLAEEAKKTEPFQQFINLNDKRFLNPENMIKEIQHYCRQTRQKIPRTAGELACCIYSNLAIIYAIAIKELETITEKPIEQFHIIGGGARNDFLNQLTADMSGKAVYAGPIEATATGNLLMQMIAAKEVKDIKEARQVVRNSFPIKVFTPKDIDRSTIIQSFQQTVLKALSK.

Residue 10–14 (ASSGR) coordinates ATP. Substrate-binding positions include Ala-78 and 233–235 (HDT). Asp-234 (proton acceptor) is an active-site residue. Thr-256 provides a ligand contact to ATP. Position 293 (Asn-293) interacts with substrate. Gln-301 lines the ATP pocket. Cys-351 and Cys-368 are disulfide-bonded. Gly-400 provides a ligand contact to ATP.

It belongs to the rhamnulokinase family. It depends on Mg(2+) as a cofactor.

The catalysed reaction is L-rhamnulose + ATP = L-rhamnulose 1-phosphate + ADP + H(+). Its pathway is carbohydrate degradation; L-rhamnose degradation; glycerone phosphate from L-rhamnose: step 2/3. Its function is as follows. Involved in the catabolism of L-rhamnose (6-deoxy-L-mannose). Catalyzes the transfer of the gamma-phosphate group from ATP to the 1-hydroxyl group of L-rhamnulose to yield L-rhamnulose 1-phosphate. The protein is Rhamnulokinase of Bacillus subtilis (strain 168).